The chain runs to 957 residues: Glycine dehydrogenase (decarboxylating) (957 aa).

Lys-708 is modified (N6-(pyridoxal phosphate)lysine).

The protein belongs to the GcvP family. In terms of assembly, the glycine cleavage system is composed of four proteins: P, T, L and H. Pyridoxal 5'-phosphate is required as a cofactor.

It catalyses the reaction N(6)-[(R)-lipoyl]-L-lysyl-[glycine-cleavage complex H protein] + glycine + H(+) = N(6)-[(R)-S(8)-aminomethyldihydrolipoyl]-L-lysyl-[glycine-cleavage complex H protein] + CO2. Its function is as follows. The glycine cleavage system catalyzes the degradation of glycine. The P protein binds the alpha-amino group of glycine through its pyridoxal phosphate cofactor; CO(2) is released and the remaining methylamine moiety is then transferred to the lipoamide cofactor of the H protein. In Salmonella newport (strain SL254), this protein is Glycine dehydrogenase (decarboxylating).